The primary structure comprises 158 residues: Mitotic-spindle organizing protein 2 (158 aa).

Phosphoserine is present on serine 34. The tract at residues 81-158 is disordered; it reads AGQRVASDSQ…PGRSPPRSGT (78 aa). Positions 110–119 are enriched in gly residues; it reads KGGGALGGGP. The residue at position 152 (serine 152) is a Phosphoserine.

It belongs to the MOZART2 family. Associates with the gamma-tubulin ring complex (gTuRC) consisting of TUBGCP2, TUBGCP3, TUBGCP4, TUBGCP5 and TUBGCP6 and gamma-tubulin TUBG1 or TUBG2; within the complex, interacts with TUBGCP2; the interaction plays a role in gTuRC activation.

The protein localises to the cytoplasm. Its subcellular location is the cytoskeleton. The protein resides in the microtubule organizing center. It localises to the centrosome. It is found in the spindle. Functionally, required for the recruitment and the assembly of the gamma-tubulin ring complex (gTuRC) at the centrosome. The gTuRC regulates the minus-end nucleation of alpha-beta tubulin heterodimers that grow into microtubule protafilaments, a critical step in centrosome duplication and spindle formation. This Bos taurus (Bovine) protein is Mitotic-spindle organizing protein 2 (MZT2).